Consider the following 149-residue polypeptide: Large ribosomal subunit protein eL19 (149 aa).

Residues 55–69 (KGISSARKKEVQEQK) are compositionally biased toward basic and acidic residues. Residues 55-93 (KGISSARKKEVQEQKRKGKRKGPGSRRGAKGARTPKKEK) form a disordered region. Residues 70–88 (RKGKRKGPGSRRGAKGART) are compositionally biased toward basic residues.

The protein belongs to the eukaryotic ribosomal protein eL19 family. In terms of assembly, part of the 50S ribosomal subunit.

Binds to the 23S rRNA. This chain is Large ribosomal subunit protein eL19, found in Methanococcus vannielii.